We begin with the raw amino-acid sequence, 121 residues long: DNA-directed RNA polymerase subunit omega (121 aa).

This sequence belongs to the RNA polymerase subunit omega family. In terms of assembly, the RNAP catalytic core consists of 2 alpha, 1 beta, 1 beta' and 1 omega subunit. When a sigma factor is associated with the core the holoenzyme is formed, which can initiate transcription.

It carries out the reaction RNA(n) + a ribonucleoside 5'-triphosphate = RNA(n+1) + diphosphate. Its function is as follows. Promotes RNA polymerase assembly. Latches the N- and C-terminal regions of the beta' subunit thereby facilitating its interaction with the beta and alpha subunits. The protein is DNA-directed RNA polymerase subunit omega of Syntrophobacter fumaroxidans (strain DSM 10017 / MPOB).